We begin with the raw amino-acid sequence, 201 residues long: Syndecan-2 (201 aa).

A signal peptide spans 1–18 (MQRAWILLTLGLMACVSA). At 19–144 (ETRAELTSDK…HSDNLFKRTE (126 aa)) the chain is on the extracellular side. Residues Ser41, Ser55, and Ser57 are each glycosylated (O-linked (Xyl...) (glycosaminoglycan) serine). 2 disordered regions span residues 42–69 (GLYP…PDLT) and 88–129 (TMTL…KSTD). Polar residues predominate over residues 90–102 (TLKTQSITPTQTE). Residues 106-123 (ETDKKEFEISEAEEKQDP) show a composition bias toward basic and acidic residues. Ser115 bears the Phosphoserine mark. The helical transmembrane segment at 145–169 (VLAAVIAGGVIGFLFAIFLILLLVY) threads the bilayer. The Cytoplasmic portion of the chain corresponds to 170-201 (RMRKKDEGSYDLGERKPSSAAYQKAPTKEFYA). The segment at 178 to 201 (SYDLGERKPSSAAYQKAPTKEFYA) is disordered. At Ser187 the chain carries Phosphoserine.

Belongs to the syndecan proteoglycan family. In terms of assembly, interacts (via cytoplasmic domain) with SARM1. Forms a complex with SDCBP and PDCD6IP. Post-translationally, O-glycosylated; contains both heparan sulfate and chondroitin sulfate.

Its subcellular location is the membrane. Functionally, cell surface proteoglycan which regulates dendritic arbor morphogenesis. This chain is Syndecan-2 (Sdc2), found in Rattus norvegicus (Rat).